Consider the following 310-residue polypeptide: Aspartate carbamoyltransferase catalytic subunit (310 aa).

Residues Arg-55 and Thr-56 each coordinate carbamoyl phosphate. L-aspartate is bound at residue Lys-83. The carbamoyl phosphate site is built by Arg-105, His-136, and Gln-139. L-aspartate is bound by residues Arg-169 and Arg-223. Positions 264 and 265 each coordinate carbamoyl phosphate.

Belongs to the aspartate/ornithine carbamoyltransferase superfamily. ATCase family. Heterododecamer (2C3:3R2) of six catalytic PyrB chains organized as two trimers (C3), and six regulatory PyrI chains organized as three dimers (R2).

It catalyses the reaction carbamoyl phosphate + L-aspartate = N-carbamoyl-L-aspartate + phosphate + H(+). It participates in pyrimidine metabolism; UMP biosynthesis via de novo pathway; (S)-dihydroorotate from bicarbonate: step 2/3. Catalyzes the condensation of carbamoyl phosphate and aspartate to form carbamoyl aspartate and inorganic phosphate, the committed step in the de novo pyrimidine nucleotide biosynthesis pathway. The polypeptide is Aspartate carbamoyltransferase catalytic subunit (Saccharopolyspora erythraea (strain ATCC 11635 / DSM 40517 / JCM 4748 / NBRC 13426 / NCIMB 8594 / NRRL 2338)).